A 304-amino-acid chain; its full sequence is tRNA-uridine aminocarboxypropyltransferase 1 (304 aa).

N-acetylserine is present on S2. The DXTW signature appears at D206–W209.

This sequence belongs to the TDD superfamily. DTWD1 family.

The protein localises to the nucleus. It catalyses the reaction a uridine in tRNA + S-adenosyl-L-methionine = a 3-[(3S)-3-amino-3-carboxypropyl]uridine in tRNA + S-methyl-5'-thioadenosine + H(+). Catalyzes the formation of 3-(3-amino-3-carboxypropyl)uridine (acp3U) at position 20 in the D-loop of several cytoplasmic tRNAs (acp3U(20)). The sequence is that of tRNA-uridine aminocarboxypropyltransferase 1 from Pongo abelii (Sumatran orangutan).